We begin with the raw amino-acid sequence, 282 residues long: Tumor necrosis factor ligand superfamily member 6 (282 aa).

The Cytoplasmic segment spans residues 1-82; it reads MQQPFNYPYP…KKKRDHNAGL (82 aa). A disordered region spans residues 30-73; sequence FPCPASVPGRPGQRRPPPPPPPPPPPPTLLPSRPLPPLPPPSLK. The segment covering 43 to 71 has biased composition (pro residues); it reads RRPPPPPPPPPPPPTLLPSRPLPPLPPPS. The helical; Signal-anchor for type II membrane protein transmembrane segment at 83–103 threads the bilayer; that stretch reads CLLVMFFMVLVALVGLGLGMF. Over 104-282 the chain is Extracellular; the sequence is QLFHLQKELT…SKTFFGLYKL (179 aa). Residues 119–132 are compositionally biased toward basic and acidic residues; that stretch reads ASQRHTESSLEKQI. The tract at residues 119 to 140 is disordered; it reads ASQRHTESSLEKQIGHPNLPSE. The region spanning 146 to 282 is the THD domain; that stretch reads KVAHLTGKPN…SKTFFGLYKL (137 aa). Asn-185 carries N-linked (GlcNAc...) asparagine glycosylation. Cys-203 and Cys-234 are oxidised to a cystine. N-linked (GlcNAc...) asparagine glycans are attached at residues Asn-251 and Asn-261.

This sequence belongs to the tumor necrosis factor family. In terms of assembly, homotrimer. Interacts with ARHGAP9, BAIAP2L1, BTK, CACNB3, CACNB4, CRK, DLG2, DNMBP, DOCK4, EPS8L3, FGR, FYB1, FYN, HCK, ITK, ITSN2, KALRN, LYN, MACC1, MIA, MPP4, MYO15A, NCF1, NCK1, NCK2, NCKIPSD, OSTF1, PIK3R1, PSTPIP1, RIMBP3C, SAMSN1, SH3GL3, SH3PXD2B, SH3PXD2A, SH3RF2, SKAP2, SNX33, SNX9, SORBS3, SPTA1, SRC, SRGAP1, SRGAP2, SRGAP3, TEC, TJP3 and YES1. In terms of processing, the soluble form derives from the membrane form by proteolytic processing. The membrane-bound form undergoes two successive intramembrane proteolytic cleavages. The first one is processed by ADAM10 producing an N-terminal fragment, which lacks the receptor-binding extracellular domain. This ADAM10-processed FasL (FasL APL) remnant form is still membrane anchored and further processed by SPPL2A that liberates the FasL intracellular domain (FasL ICD). FasL shedding by ADAM10 is a prerequisite for subsequent intramembrane cleavage by SPPL2A in T-cells. Phosphorylated by FGR on tyrosine residues; this is required for ubiquitination and subsequent internalization. Post-translationally, N-glycosylated. Glycosylation enhances apoptotic activity. In terms of processing, monoubiquitinated.

It localises to the cell membrane. The protein resides in the cytoplasmic vesicle lumen. It is found in the lysosome lumen. The protein localises to the secreted. Its subcellular location is the nucleus. In terms of biological role, cytokine that binds to TNFRSF6/FAS, a receptor that transduces the apoptotic signal into cells. Involved in cytotoxic T-cell-mediated apoptosis, natural killer cell-mediated apoptosis and in T-cell development. Initiates fratricidal/suicidal activation-induced cell death (AICD) in antigen-activated T-cells contributing to the termination of immune responses. TNFRSF6/FAS-mediated apoptosis also has a role in the induction of peripheral tolerance. Binds to TNFRSF6B/DcR3, a decoy receptor that blocks apoptosis. Its function is as follows. Induces FAS-mediated activation of NF-kappa-B, initiating non-apoptotic signaling pathways. Can induce apoptosis but does not appear to be essential for this process. Functionally, cytoplasmic form induces gene transcription inhibition. The chain is Tumor necrosis factor ligand superfamily member 6 (FASLG) from Sus scrofa (Pig).